Reading from the N-terminus, the 548-residue chain is Membrane protein insertase YidC (548 aa).

The chain crosses the membrane as a helical span at residues 6–26 (NLLVIALLFVSFMIWQAWEQD). Residues 28–55 (NPQPQAQQTTQTTTTAAGSAADQGVPAS) form a disordered region. Residues 30–50 (QPQAQQTTQTTTTAAGSAADQ) are compositionally biased toward low complexity. Helical transmembrane passes span 350–370 (FVGNWGFSIIIITFIVRGIMY), 420–440 (LGGCFPLLIQMPIFLALYYML), 458–478 (LSAQDPYYILPILMGVTMFFI), and 499–519 (PVIFTVFFLWFPSGLVLYYIV).

The protein belongs to the OXA1/ALB3/YidC family. Type 1 subfamily. In terms of assembly, interacts with the Sec translocase complex via SecD. Specifically interacts with transmembrane segments of nascent integral membrane proteins during membrane integration.

It is found in the cell inner membrane. In terms of biological role, required for the insertion and/or proper folding and/or complex formation of integral membrane proteins into the membrane. Involved in integration of membrane proteins that insert both dependently and independently of the Sec translocase complex, as well as at least some lipoproteins. Aids folding of multispanning membrane proteins. The polypeptide is Membrane protein insertase YidC (Escherichia coli O127:H6 (strain E2348/69 / EPEC)).